The following is a 709-amino-acid chain: Fatty acid oxidation complex subunit alpha (709 aa).

Residues 1–188 (MEKTFNLTRR…KMGLVNDVVP (188 aa)) form an enoyl-CoA hydratase region. The 3-hydroxyacyl-CoA dehydrogenase stretch occupies residues 308-709 (RKVKKAVILG…EMAAEKTRFF (402 aa)).

This sequence in the N-terminal section; belongs to the enoyl-CoA hydratase/isomerase family. The protein in the central section; belongs to the 3-hydroxyacyl-CoA dehydrogenase family. In terms of assembly, heterotetramer of two alpha chains (FadJ) and two beta chains (FadI).

The protein localises to the cytoplasm. It carries out the reaction a (3S)-3-hydroxyacyl-CoA = a (2E)-enoyl-CoA + H2O. The catalysed reaction is a 4-saturated-(3S)-3-hydroxyacyl-CoA = a (3E)-enoyl-CoA + H2O. It catalyses the reaction a (3S)-3-hydroxyacyl-CoA + NAD(+) = a 3-oxoacyl-CoA + NADH + H(+). The enzyme catalyses (3S)-3-hydroxybutanoyl-CoA = (3R)-3-hydroxybutanoyl-CoA. It participates in lipid metabolism; fatty acid beta-oxidation. Catalyzes the formation of a hydroxyacyl-CoA by addition of water on enoyl-CoA. Also exhibits 3-hydroxyacyl-CoA epimerase and 3-hydroxyacyl-CoA dehydrogenase activities. The sequence is that of Fatty acid oxidation complex subunit alpha from Shewanella sp. (strain MR-4).